Reading from the N-terminus, the 341-residue chain is MLKNDLFLKALKGETVQRPPVWMMRQAGRYLPEFIELRDKYDFFTRCQTPELAAEITVQPIRRIAPDAAILFSDILVVPQAMGIEVLMKENIGPFIPNPIRSMADVQRVYVPDIQESLGYVMDAIKLTKEMLNDEVPLIGFAGSPWTIFCYAVEGRGSKSFDMAKGFCFSNPVAAHTLLQKITDTTILYLKEKVKAGVDAVQIFDSWGGMLSPVDYQEFSWKYINQIVEALADLTPVIVFGKGCWFALGEMGKSRASALGVDWTCSARNARYLSGGNITLQGNFDPSRLLSPIPTIKKMVHEMIDEFGKDKYVVNLGHGILPNIPVDHAKAFIDAVKEYGQ.

Substrate-binding positions include 25–29, phenylalanine 44, aspartate 74, tyrosine 151, serine 206, and histidine 318; that span reads RQAGR.

Belongs to the uroporphyrinogen decarboxylase family. In terms of assembly, homodimer.

It is found in the cytoplasm. The enzyme catalyses uroporphyrinogen III + 4 H(+) = coproporphyrinogen III + 4 CO2. Its pathway is porphyrin-containing compound metabolism; protoporphyrin-IX biosynthesis; coproporphyrinogen-III from 5-aminolevulinate: step 4/4. In terms of biological role, catalyzes the decarboxylation of four acetate groups of uroporphyrinogen-III to yield coproporphyrinogen-III. The sequence is that of Uroporphyrinogen decarboxylase from Flavobacterium johnsoniae (strain ATCC 17061 / DSM 2064 / JCM 8514 / BCRC 14874 / CCUG 350202 / NBRC 14942 / NCIMB 11054 / UW101) (Cytophaga johnsonae).